A 105-amino-acid chain; its full sequence is Putative neurotoxin 10 (105 aa).

Residues 1-21 (MTVSCSKVLLSLCLFLILLEA) form the signal peptide.

This sequence belongs to the scolopendra neurotoxin 10 family. Contains 3 disulfide bonds. As to expression, expressed by the venom gland.

The protein resides in the secreted. In Scolopendra mutilans (Chinese red-headed centipede), this protein is Putative neurotoxin 10.